A 214-amino-acid chain; its full sequence is uncharacterized protein (214 aa).

A signal peptide spans 1–18 (MTMYIGLILVVLATFCQG). Residue Asn-64 is glycosylated (N-linked (GlcNAc...) asparagine; by host).

This is an uncharacterized protein from Magallana gigas (Pacific oyster).